The following is a 507-amino-acid chain: ATP synthase subunit alpha, chloroplastic (507 aa).

Residue 170–177 coordinates ATP; that stretch reads GDRQTGKT.

Belongs to the ATPase alpha/beta chains family. As to quaternary structure, F-type ATPases have 2 components, CF(1) - the catalytic core - and CF(0) - the membrane proton channel. CF(1) has five subunits: alpha(3), beta(3), gamma(1), delta(1), epsilon(1). CF(0) has four main subunits: a, b, b' and c.

It is found in the plastid. The protein localises to the chloroplast thylakoid membrane. It catalyses the reaction ATP + H2O + 4 H(+)(in) = ADP + phosphate + 5 H(+)(out). Produces ATP from ADP in the presence of a proton gradient across the membrane. The alpha chain is a regulatory subunit. The sequence is that of ATP synthase subunit alpha, chloroplastic from Solanum bulbocastanum (Wild potato).